Consider the following 227-residue polypeptide: PKHD-type hydroxylase GOX0559 (227 aa).

The 101-residue stretch at 78 to 178 folds into the Fe2OG dioxygenase domain; the sequence is RVYPPLFNRY…RWASFFWSQS (101 aa). The Fe cation site is built by histidine 96, aspartate 98, and histidine 159. Residue arginine 169 coordinates 2-oxoglutarate.

The cofactor is Fe(2+). Requires L-ascorbate as cofactor.

The polypeptide is PKHD-type hydroxylase GOX0559 (Gluconobacter oxydans (strain 621H) (Gluconobacter suboxydans)).